Consider the following 201-residue polypeptide: Recombination protein RecR (201 aa).

The C4-type zinc-finger motif lies at C59–C74. The Toprim domain occupies S82–P177.

The protein belongs to the RecR family.

May play a role in DNA repair. It seems to be involved in an RecBC-independent recombinational process of DNA repair. It may act with RecF and RecO. The sequence is that of Recombination protein RecR from Rickettsia peacockii (strain Rustic).